The primary structure comprises 338 residues: tRNA N6-adenosine threonylcarbamoyltransferase (338 aa).

Fe cation contacts are provided by His-111 and His-115. Residues 134–138, Asp-167, Gly-180, and Asn-272 contribute to the substrate site; that span reads LVSGG. Fe cation is bound at residue Asp-300.

It belongs to the KAE1 / TsaD family. It depends on Fe(2+) as a cofactor.

The protein localises to the cytoplasm. The enzyme catalyses L-threonylcarbamoyladenylate + adenosine(37) in tRNA = N(6)-L-threonylcarbamoyladenosine(37) in tRNA + AMP + H(+). In terms of biological role, required for the formation of a threonylcarbamoyl group on adenosine at position 37 (t(6)A37) in tRNAs that read codons beginning with adenine. Is involved in the transfer of the threonylcarbamoyl moiety of threonylcarbamoyl-AMP (TC-AMP) to the N6 group of A37, together with TsaE and TsaB. TsaD likely plays a direct catalytic role in this reaction. This Vibrio parahaemolyticus serotype O3:K6 (strain RIMD 2210633) protein is tRNA N6-adenosine threonylcarbamoyltransferase.